The chain runs to 397 residues: tRNA(Met) cytidine acetate ligase (397 aa).

ATP is bound by residues V7 to H20, G101, N152, and R177.

This sequence belongs to the TmcAL family.

Its subcellular location is the cytoplasm. The catalysed reaction is cytidine(34) in elongator tRNA(Met) + acetate + ATP = N(4)-acetylcytidine(34) in elongator tRNA(Met) + AMP + diphosphate. Its function is as follows. Catalyzes the formation of N(4)-acetylcytidine (ac(4)C) at the wobble position of elongator tRNA(Met), using acetate and ATP as substrates. First activates an acetate ion to form acetyladenylate (Ac-AMP) and then transfers the acetyl group to tRNA to form ac(4)C34. The protein is tRNA(Met) cytidine acetate ligase of Leuconostoc citreum (strain KM20).